A 380-amino-acid chain; its full sequence is MKVLINKNELNKILKKLNNVIVSNNKMKPYHSYLLIEATEKEINFYANNEYFSAKCTLAENIDVLEEGEVIVKGKIFSELINGIKEDIITIQEKDQTLLVKTKKTNINLNTIDKKEFPRIRFNQNVDLKEFDELKIQHSLLTKGLKKIAHAVSTFRESTRKFNGVNFNGSNGKQIFLEASDSYKLSVYEIKQKTDPFNFIVETNLLSFINSFNPEGGDLISIFFRKEHKDDLSTELLIKLDNFLINYTSINESFPRVMQLFDFEPETKVTIQKNELKDALQRILTLAQNERFFLCDMQVTNSHLKINSNVQNIGASLEEVTCLKFEGHKLNIAVNALSLLEHIDSFDTDEIELYFQGSNKYFLISSNNEPELKEILVPSK.

It belongs to the beta sliding clamp family. In terms of assembly, forms a ring-shaped head-to-tail homodimer around DNA which binds and tethers DNA polymerases and other proteins to the DNA. The DNA replisome complex has a single clamp-loading complex (3 tau and 1 each of delta, delta', psi and chi subunits) which binds 3 Pol III cores (1 core on the leading strand and 2 on the lagging strand) each with a beta sliding clamp dimer. Additional proteins in the replisome are other copies of gamma, psi and chi, Ssb, DNA helicase and RNA primase.

Its subcellular location is the cytoplasm. In terms of biological role, confers DNA tethering and processivity to DNA polymerases and other proteins. Acts as a clamp, forming a ring around DNA (a reaction catalyzed by the clamp-loading complex) which diffuses in an ATP-independent manner freely and bidirectionally along dsDNA. Initially characterized for its ability to contact the catalytic subunit of DNA polymerase III (Pol III), a complex, multichain enzyme responsible for most of the replicative synthesis in bacteria; Pol III exhibits 3'-5' exonuclease proofreading activity. The beta chain is required for initiation of replication as well as for processivity of DNA replication. The chain is Beta sliding clamp (dnaN) from Mycoplasma pneumoniae (strain ATCC 29342 / M129 / Subtype 1) (Mycoplasmoides pneumoniae).